We begin with the raw amino-acid sequence, 391 residues long: Phosphoglycerate kinase (391 aa).

Residues 21 to 23, Arg36, 59 to 62, Arg113, and Arg146 contribute to the substrate site; these read DLN and HLGR. ATP-binding positions include Lys197, Glu319, and 345–348; that span reads GGDT.

Belongs to the phosphoglycerate kinase family. Monomer.

It is found in the cytoplasm. The enzyme catalyses (2R)-3-phosphoglycerate + ATP = (2R)-3-phospho-glyceroyl phosphate + ADP. It functions in the pathway carbohydrate degradation; glycolysis; pyruvate from D-glyceraldehyde 3-phosphate: step 2/5. This is Phosphoglycerate kinase from Stenotrophomonas maltophilia (strain K279a).